Consider the following 96-residue polypeptide: UPF0729 protein AGAP000931 (96 aa).

The interval 65–96 is disordered; that stretch reads VPPGHDPVGPTVAADTATSDAVDDAASSKKTL. A compositionally biased stretch (low complexity) spans 75 to 96; sequence TVAADTATSDAVDDAASSKKTL.

The protein belongs to the UPF0729 family.

The polypeptide is UPF0729 protein AGAP000931 (Anopheles gambiae (African malaria mosquito)).